A 207-amino-acid chain; its full sequence is LexA repressor (207 aa).

A DNA-binding region (H-T-H motif) is located at residues 28-48; it reads RAEIAQKLGFKSANAAEEHLK. Active-site for autocatalytic cleavage activity residues include Ser124 and Lys161.

This sequence belongs to the peptidase S24 family. As to quaternary structure, homodimer.

It carries out the reaction Hydrolysis of Ala-|-Gly bond in repressor LexA.. Its function is as follows. Represses a number of genes involved in the response to DNA damage (SOS response), including recA and lexA. In the presence of single-stranded DNA, RecA interacts with LexA causing an autocatalytic cleavage which disrupts the DNA-binding part of LexA, leading to derepression of the SOS regulon and eventually DNA repair. This chain is LexA repressor, found in Aeromonas salmonicida (strain A449).